Here is a 291-residue protein sequence, read N- to C-terminus: MAITTAASRLGVAPYNESRPVELRPDFSLDDAKMVIRAVYRQVLGNDYIMDSERLKGAESLLTNGSISVREFVRTVAKSELYKKKFLYNNFQTRVIELNYKHLLGRAPFSEDEVIFHLDLYENQGFDADIDSYIDSVEYQENFGENIVPYYRFNNQVGDRTVGFTRMFRLYRGYANSDRSQLERSSSRLATELGQNTVSAIVGPSGSNAGWAYRPSRAGNTPAKALGGTVPFGQASKLFRVEITAISAPGYPKVRRSNKAVIVPFEQLNQTLQQINRLGGKVASITPASLS.

Residues 2-179 enclose the PBS-linker domain; it reads AITTAASRLG…LYRGYANSDR (178 aa). The 53-residue stretch at 236–288 folds into the CpcD-like domain; that stretch reads SKLFRVEITAISAPGYPKVRRSNKAVIVPFEQLNQTLQQINRLGGKVASITPA.

It belongs to the phycobilisome linker protein family. As to quaternary structure, part of 2 PBS rod complexes, the conventional CpcG-PBS rod and a photosystem I-specific CpcL-PBS rod, both of which include ferredoxin--NADP reductase (petH). CpcG-PBS has on average 3 stacked phycocyanin hexamers (PC, CpcA and CpcB). Linker CpcG connects the PC stack to the thylakoid, the hexamers are linked by 1 copy of CpcC1, 1 copy of CpcC2 and the stack is terminated by a single copy of CpcD. The CpcL-PBS has on average 5 stacked phycocyanin hexamers (PC, CpcA and CpcB). Linker CpcL connects the PC stack to the thylakoid, the hexamers are linked by 1 copy of CpcC1, 3 copies of CpcC2 and the stack is terminated by a single copy of CpcD.

Its subcellular location is the cellular thylakoid membrane. Functionally, rod linker protein, connecting hexameric phycocyanin (PC, made by cpcA and cpcB) rods in the phycobilisome (PBS). PC is the major phycobiliprotein in PBS rods. Linker polypeptides determine the state of aggregation and the location of the disk-shaped phycobiliprotein units within the phycobilisome and modulate their spectroscopic properties in order to mediate a directed and optimal energy transfer. This is Phycobilisome 32.1 kDa linker polypeptide, phycocyanin-associated, rod 1 (cpcC1) from Synechocystis sp. (strain ATCC 27184 / PCC 6803 / Kazusa).